A 443-amino-acid polypeptide reads, in one-letter code: Transcriptional adapter 2-alpha (443 aa).

Serine 6 is subject to Phosphoserine. Residues 12 to 69 form a ZZ-type zinc finger; it reads SDKPPCRGCSSYLMEPYIKCAECGPPPFFLCLQCFTRGFEYKKHQSDHTYEIMTSDFP. Residues cysteine 17, cysteine 20, cysteine 31, cysteine 34, cysteine 42, cysteine 45, histidine 55, and histidine 59 each coordinate Zn(2+). Residues 70–122 enclose the SANT domain; sequence VLDPSWTAQEEMALLEAVMDCGFGNWQDVANQMCTKTKEECEKHYMKHFINNP. Residues lysine 132 and lysine 138 each participate in a glycyl lysine isopeptide (Lys-Gly) (interchain with G-Cter in SUMO2) cross-link. Positions 356 to 443 constitute an SWIRM domain; that stretch reads NSGRRSAPPL…LIREGYITKA (88 aa). The DNA-binding element occupies 426–435; it reads KTRKIYDFLI.

In terms of assembly, interacts with GCN5 and NR3C1. Associated with the P/CAF protein in the PCAF complex. Component of the PCAF complex, at least composed of TADA2L/ADA2, TADA3L/ADA3, TAF5L/PAF65-beta, TAF6L/PAF65-alpha, TAF10/TAFII30, TAF12/TAFII20, TAF9/TAFII31 and TRRAP. Component of the ADA2A-containing complex (ATAC), composed of KAT14, KAT2A, TADA2L, TADA3L, ZZ3, MBIP, WDR5, YEATS2, CCDC101 and DR1. Interacts with CCDC134.

The protein localises to the nucleus. It is found in the chromosome. Functionally, component of the ATAC complex, a complex with histone acetyltransferase activity on histones H3 and H4. Required for the function of some acidic activation domains, which activate transcription from a distant site. Binds double-stranded DNA. Binds dinucleosomes, probably at the linker region between neighboring nucleosomes. Plays a role in chromatin remodeling. May promote TP53/p53 'Lys-321' acetylation, leading to reduced TP53 stability and transcriptional activity. May also promote XRCC6 acetylation thus facilitating cell apoptosis in response to DNA damage. The polypeptide is Transcriptional adapter 2-alpha (Tada2a) (Rattus norvegicus (Rat)).